Here is a 58-residue protein sequence, read N- to C-terminus: MAVPKKKTSKAKRNQRSATWKGKAAVAAQRAMSIGKSVLSGRAQGFVYPVREADDEES.

Over residues 1 to 15 (MAVPKKKTSKAKRNQ) the composition is skewed to basic residues. The interval 1 to 23 (MAVPKKKTSKAKRNQRSATWKGK) is disordered.

It belongs to the bacterial ribosomal protein bL32 family.

This is Large ribosomal subunit protein bL32 from Parasynechococcus marenigrum (strain WH8102).